The primary structure comprises 221 residues: Germin-like protein 5-1 (221 aa).

The signal sequence occupies residues 1 to 25; that stretch reads MARPSLPCAVVAVLLLALLPTPSTA. A disulfide bridge links cysteine 35 with cysteine 50. Residues 62–210 enclose the Cupin type-1 domain; it reads KGLAAAGNTN…AFQVGTKEVE (149 aa). Asparagine 71 carries N-linked (GlcNAc...) asparagine glycosylation. 4 residues coordinate Mn(2+): histidine 110, histidine 112, glutamate 117, and histidine 156.

Belongs to the germin family. Oligomer (believed to be a pentamer but probably hexamer).

The protein localises to the secreted. It localises to the extracellular space. The protein resides in the apoplast. Its function is as follows. May play a role in plant defense. Probably has no oxalate oxidase activity even if the active site is conserved. This is Germin-like protein 5-1 from Oryza sativa subsp. japonica (Rice).